We begin with the raw amino-acid sequence, 416 residues long: E3 ubiquitin-protein ligase makorin-2 (416 aa).

C3H1-type zinc fingers lie at residues 2–29 and 31–58; these read STKQITCRYFMHGVCREGSQCLFSHDLA and SKPSTICKYYQKGYCAYGTRCRYDHTRP. Residues 113 to 122 are compositionally biased toward basic and acidic residues; it reads NLSGMAERKT. Residues 113–142 are disordered; sequence NLSGMAERKTQPSMVSNPGSCSDPQPSPEM. Residues 123–136 are compositionally biased toward polar residues; the sequence is QPSMVSNPGSCSDP. S139 carries the phosphoserine modification. The C3H1-type 3 zinc-finger motif lies at 165–192; sequence SNEQQLCPYAAAGECRFGDACVYLHGEV. Residues 193-222 form a makorin-type Cys-His region; the sequence is CEICRLQVLHPFDPEQRKAHEKICMLTFEH. The RING-type zinc-finger motif lies at 238–292; it reads CSICMEVILEKASASERRFGILSNCNHTYCLSCIRQWRCAKQFENPIIKSCPECR. The segment at 321 to 350 adopts a C3H1-type 4 zinc-finger fold; sequence GMGKKACKYFEQGKGTCPFGSKCLYRHAYP.

As to quaternary structure, interacts with PDLIM2 (via LIM zinc-binding domain). Interacts with RELA. As to expression, expressed in sperm, with significantly reduced expression in sperm of patients with oligoasthenoteratozoospermia (at protein level). Widely expressed with expression in testis, ovary, small intestine, colon, peripheral blood leukocytes, fetal liver, bone marrow, thymus, lymph node and spleen.

It localises to the cytoplasm. Its subcellular location is the nucleus. It catalyses the reaction S-ubiquitinyl-[E2 ubiquitin-conjugating enzyme]-L-cysteine + [acceptor protein]-L-lysine = [E2 ubiquitin-conjugating enzyme]-L-cysteine + N(6)-ubiquitinyl-[acceptor protein]-L-lysine.. It participates in protein modification; protein ubiquitination. In terms of biological role, E3 ubiquitin ligase catalyzing the covalent attachment of ubiquitin moieties onto substrate proteins. Promotes the polyubiquitination and proteasome-dependent degradation of RELA/p65, thereby suppressing RELA-mediated NF-kappaB transactivation and negatively regulating inflammatory responses. Plays a role in the regulation of spermiation and in male fertility. The polypeptide is E3 ubiquitin-protein ligase makorin-2 (MKRN2) (Homo sapiens (Human)).